A 143-amino-acid chain; its full sequence is Hemoglobin subunit alpha-1 (143 aa).

An N-acetylserine modification is found at Ser-2. Residues 2 to 143 (SLSSKDKATV…LALALAEKYR (142 aa)) form the Globin domain. His-60 serves as a coordination point for O2. His-89 is a binding site for heme b.

It belongs to the globin family. As to quaternary structure, hb 1 is a heterotetramer of two alpha-1 and two beta-1 chains. In terms of tissue distribution, red blood cells.

Functionally, involved in oxygen transport from gills to the various peripheral tissues. The chain is Hemoglobin subunit alpha-1 (hba1) from Arctogadus glacialis (Arctic cod).